Reading from the N-terminus, the 381-residue chain is Dual-specificity RNA methyltransferase RlmN (381 aa).

Residue Glu96 is the Proton acceptor of the active site. The region spanning 102 to 342 (TDDRGTLCVS…TRTTRGDDID (241 aa)) is the Radical SAM core domain. An intrachain disulfide couples Cys109 to Cys345. [4Fe-4S] cluster contacts are provided by Cys116, Cys120, and Cys123. Residues 170 to 171 (GE), Ser202, 224 to 226 (SLH), and Asn302 contribute to the S-adenosyl-L-methionine site. Catalysis depends on Cys345, which acts as the S-methylcysteine intermediate.

It belongs to the radical SAM superfamily. RlmN family. The cofactor is [4Fe-4S] cluster.

It localises to the cytoplasm. It carries out the reaction adenosine(2503) in 23S rRNA + 2 reduced [2Fe-2S]-[ferredoxin] + 2 S-adenosyl-L-methionine = 2-methyladenosine(2503) in 23S rRNA + 5'-deoxyadenosine + L-methionine + 2 oxidized [2Fe-2S]-[ferredoxin] + S-adenosyl-L-homocysteine. It catalyses the reaction adenosine(37) in tRNA + 2 reduced [2Fe-2S]-[ferredoxin] + 2 S-adenosyl-L-methionine = 2-methyladenosine(37) in tRNA + 5'-deoxyadenosine + L-methionine + 2 oxidized [2Fe-2S]-[ferredoxin] + S-adenosyl-L-homocysteine. Functionally, specifically methylates position 2 of adenine 2503 in 23S rRNA and position 2 of adenine 37 in tRNAs. m2A2503 modification seems to play a crucial role in the proofreading step occurring at the peptidyl transferase center and thus would serve to optimize ribosomal fidelity. The sequence is that of Dual-specificity RNA methyltransferase RlmN from Pseudomonas putida (strain ATCC 700007 / DSM 6899 / JCM 31910 / BCRC 17059 / LMG 24140 / F1).